The following is a 92-amino-acid chain: Small ribosomal subunit protein uS19 (92 aa).

Positions 72–92 (GEFSPTRTYTGHGSDKKSKRG) are disordered.

Belongs to the universal ribosomal protein uS19 family.

In terms of biological role, protein S19 forms a complex with S13 that binds strongly to the 16S ribosomal RNA. The protein is Small ribosomal subunit protein uS19 of Gluconobacter oxydans (strain 621H) (Gluconobacter suboxydans).